A 375-amino-acid polypeptide reads, in one-letter code: Tyrosine--tRNA ligase (375 aa).

L-tyrosine-binding residues include Y37, Y168, Q172, D175, and Q190. The short motif at 251 to 255 is the 'KMSKS' region element; the sequence is KMSKS. K254 is a binding site for ATP.

The protein belongs to the class-I aminoacyl-tRNA synthetase family. TyrS type 4 subfamily. Homodimer.

The protein localises to the cytoplasm. It catalyses the reaction tRNA(Tyr) + L-tyrosine + ATP = L-tyrosyl-tRNA(Tyr) + AMP + diphosphate + H(+). Its function is as follows. Catalyzes the attachment of tyrosine to tRNA(Tyr) in a two-step reaction: tyrosine is first activated by ATP to form Tyr-AMP and then transferred to the acceptor end of tRNA(Tyr). The protein is Tyrosine--tRNA ligase of Thermococcus kodakarensis (strain ATCC BAA-918 / JCM 12380 / KOD1) (Pyrococcus kodakaraensis (strain KOD1)).